Consider the following 279-residue polypeptide: Odontogenic ameloblast-associated protein (279 aa).

Residues methionine 1–serine 15 form the signal peptide. 2 O-linked (GalNAc...) threonine glycosylation sites follow: threonine 115 and threonine 119. Residues methionine 127–tyrosine 129 are interaction with ARHGEF5. Over residues serine 243–threonine 263 the composition is skewed to polar residues. Positions serine 243–proline 279 are disordered. Threonine 244 carries an O-linked (GalNAc...) threonine glycan. The O-linked (GalNAc...) serine glycan is linked to serine 249. 3 O-linked (GalNAc...) threonine glycosylation sites follow: threonine 250, threonine 251, and threonine 255. The O-linked (GalNAc...) serine glycan is linked to serine 256. O-linked (GalNAc...) threonine glycosylation is found at threonine 261, threonine 263, and threonine 273. Over residues proline 267 to proline 279 the composition is skewed to basic and acidic residues. An O-linked (GalNAc...) serine glycan is attached at serine 275.

It belongs to the ODAM family. As to quaternary structure, interacts (via C-terminus) with ARHGEF5. Post-translationally, O-glycosylated. Expressed in the junctional epithelium of healthy teeth. In periodontitis, absent in the pocket epithelium of the diseased periodontium but is detected in the gingival crevicular fluid.

Its subcellular location is the secreted. The protein resides in the cytoplasm. The protein localises to the nucleus. In terms of biological role, tooth-associated epithelia protein that probably plays a role in odontogenesis, the complex process that results in the initiation and generation of the tooth. May be incorporated in the enamel matrix at the end of mineralization process. Involved in the induction of RHOA activity via interaction with ARHGEF and expression of downstream factors such as ROCK. Plays a role in attachment of the junctional epithelium to the tooth surface. The polypeptide is Odontogenic ameloblast-associated protein (ODAM) (Homo sapiens (Human)).